The chain runs to 297 residues: Large ribosomal subunit protein uL18 (297 aa).

A Glycyl lysine isopeptide (Lys-Gly) (interchain with G-Cter in ubiquitin) cross-link involves residue lysine 164. Phosphoserine occurs at positions 167, 176, and 235.

The protein belongs to the universal ribosomal protein uL18 family. Component of the large ribosomal subunit (LSU). Mature yeast ribosomes consist of a small (40S) and a large (60S) subunit. The 40S small subunit contains 1 molecule of ribosomal RNA (18S rRNA) and 33 different proteins (encoded by 57 genes). The large 60S subunit contains 3 rRNA molecules (25S, 5.8S and 5S rRNA) and 46 different proteins (encoded by 81 genes). Component of a hexameric 5S RNP precursor complex, composed of 5S RNA, RRS1, RPF2, RPL5, RPL11A/RPL11B and SYO1; this complex acts as a precursor for ribosome assembly. RPL5/uL18 forms a heterotrimeric complex with SYO1 and RPL11A/RPL11B/uL5. Interaction of this complex with KAP104 allows the nuclear import of the heterotrimer.

It localises to the cytoplasm. The protein localises to the nucleus. In terms of biological role, component of the ribosome, a large ribonucleoprotein complex responsible for the synthesis of proteins in the cell. The small ribosomal subunit (SSU) binds messenger RNAs (mRNAs) and translates the encoded message by selecting cognate aminoacyl-transfer RNA (tRNA) molecules. The large subunit (LSU) contains the ribosomal catalytic site termed the peptidyl transferase center (PTC), which catalyzes the formation of peptide bonds, thereby polymerizing the amino acids delivered by tRNAs into a polypeptide chain. The nascent polypeptides leave the ribosome through a tunnel in the LSU and interact with protein factors that function in enzymatic processing, targeting, and the membrane insertion of nascent chains at the exit of the ribosomal tunnel. In Saccharomyces cerevisiae (strain ATCC 204508 / S288c) (Baker's yeast), this protein is Large ribosomal subunit protein uL18.